Consider the following 700-residue polypeptide: Tectonic-2 (700 aa).

The N-terminal stretch at 1–25 (MGSLSPLSLLWGLLLLQGVLRPLRG) is a signal peptide. Residues 26-665 (DPVFIPPFIR…YYQGEPQSQC (640 aa)) lie on the Extracellular side of the membrane. N-linked (GlcNAc...) asparagine glycosylation is found at Asn76, Asn82, Asn146, Asn156, and Asn389. The helical transmembrane segment at 666 to 682 (VAKGLMLLSLLMLAILL) threads the bilayer. Residues 683–700 (RHPWVRMCKARDSAAIYH) lie on the Cytoplasmic side of the membrane.

Belongs to the tectonic family. In terms of assembly, part of the tectonic-like complex (also named B9 complex). As to expression, significant expression is observed in brain, kidney and eye.

It localises to the membrane. The protein localises to the cytoplasm. It is found in the cytoskeleton. Its subcellular location is the cilium basal body. Functionally, component of the tectonic-like complex, a complex localized at the transition zone of primary cilia and acting as a barrier that prevents diffusion of transmembrane proteins between the cilia and plasma membranes. Required for hedgehog signaling transduction. This is Tectonic-2 (Tctn2) from Mus musculus (Mouse).